Here is a 909-residue protein sequence, read N- to C-terminus: Phosphoenolpyruvate carboxylase (909 aa).

Catalysis depends on residues H138 and K572.

Belongs to the PEPCase type 1 family. Requires Mg(2+) as cofactor.

It carries out the reaction oxaloacetate + phosphate = phosphoenolpyruvate + hydrogencarbonate. Forms oxaloacetate, a four-carbon dicarboxylic acid source for the tricarboxylic acid cycle. This is Phosphoenolpyruvate carboxylase from Lactobacillus delbrueckii subsp. bulgaricus (strain ATCC 11842 / DSM 20081 / BCRC 10696 / JCM 1002 / NBRC 13953 / NCIMB 11778 / NCTC 12712 / WDCM 00102 / Lb 14).